A 179-amino-acid chain; its full sequence is Large ribosomal subunit protein uL5 (179 aa).

The protein belongs to the universal ribosomal protein uL5 family. In terms of assembly, part of the 50S ribosomal subunit; part of the 5S rRNA/L5/L18/L25 subcomplex. Contacts the 5S rRNA and the P site tRNA. Forms a bridge to the 30S subunit in the 70S ribosome.

Functionally, this is one of the proteins that bind and probably mediate the attachment of the 5S RNA into the large ribosomal subunit, where it forms part of the central protuberance. In the 70S ribosome it contacts protein S13 of the 30S subunit (bridge B1b), connecting the 2 subunits; this bridge is implicated in subunit movement. Contacts the P site tRNA; the 5S rRNA and some of its associated proteins might help stabilize positioning of ribosome-bound tRNAs. The polypeptide is Large ribosomal subunit protein uL5 (Shewanella sp. (strain MR-4)).